A 664-amino-acid chain; its full sequence is DCC-interacting protein 13-beta (664 aa).

Positions 1-428 (MPAVDKLLLE…NSEMENENDK (428 aa)) are required for RAB5A binding. The region spanning 3 to 268 (AVDKLLLEEA…ESVYTPDSDV (266 aa)) is the BAR domain. The region spanning 277–375 (LIQKAGYLNL…WICAINNISR (99 aa)) is the PH domain. Residues 488–637 (SLLQQMFIVR…LMLSIPLTND (150 aa)) enclose the PID domain. The interval 643–664 (LNDQPDDDDGNPNEHRGAESEA) is disordered. Positions 654–664 (PNEHRGAESEA) are enriched in basic and acidic residues.

As to quaternary structure, homodimer. Homotetramer. Binds RAB5A/Rab5 through an N-terminal domain. This interaction is essential for its recruitment to endosomal membranes as well as its role in cell proliferation. Binds subunits of the NuRD/MeCP1 complex. Interacts with FSHR; interaction is independent of follicle stimulating hormone stimulation. Interacts with APPL1; the interaction is decreased by adiponectin in a time-dependent manner. Forms a complex comprising APPL1, RUVBL2, CTNNB1, HDAC1 and HDAC2; interaction reduces interaction between CTNNB1, HDAC1, HDAC2 and RUVBL2 leading to the decrease of deacetylase activity of this complex; affects the recruitment of repressive complexes to the Wnt target genes. Interacts (via BAR domain) with TBC1D1; interaction is dependent of TBC1D1 phosphorylation at 'Ser-235'; interaction diminishes the phosphorylation of TBC1D1 at 'Thr-596', resulting in inhibition of SLC2A4 translocation and glucose uptake. Interacts with ANXA2; targets APPL2 to endosomes and acting in parallel to RAB5A. Interacts with RAB31 (in GTP-bound form); interaction contributes to or enhances recruitment of APPL2 to the phagosomes; interaction enhances Fc-gamma receptor-mediated phagocytosis through PI3K/Akt signaling in macrophages. Interacts with PIK3R1; forms a complex with PIK3R1 and APPL1. Interacts (via BAR domain) with ADIPOR1; hinders the accessibility of APPL1 to ADIPOR1; negatively regulates adiponectin signaling; ADIPOQ dissociates this interaction and facilitates the recruitment of APPL1 to ADIPOR1. Interacts (via BAR domain) with ADIPOR2; ADIPOQ dissociates this interaction. As to expression, high levels in brain, heart, kidney and skeletal muscle.

The protein resides in the early endosome membrane. It is found in the nucleus. It localises to the cell membrane. The protein localises to the endosome membrane. Its subcellular location is the cytoplasm. The protein resides in the cytoplasmic vesicle. It is found in the phagosome. It localises to the cell projection. The protein localises to the ruffle. Its subcellular location is the ruffle membrane. The protein resides in the phagosome membrane. Its function is as follows. Multifunctional adapter protein that binds to various membrane receptors, nuclear factors and signaling proteins to regulate many processes, such as cell proliferation, immune response, endosomal trafficking and cell metabolism. Regulates signaling pathway leading to cell proliferation through interaction with RAB5A and subunits of the NuRD/MeCP1 complex. Plays a role in immune response by modulating phagocytosis, inflammatory and innate immune responses. In macrophages, enhances Fc-gamma receptor-mediated phagocytosis through interaction with RAB31 leading to activation of PI3K/Akt signaling. In response to LPS, modulates inflammatory responses by playing a key role on the regulation of TLR4 signaling and in the nuclear translocation of RELA/NF-kappa-B p65 and the secretion of pro- and anti-inflammatory cytokines. Also functions as a negative regulator of innate immune response via inhibition of AKT1 signaling pathway by forming a complex with APPL1 and PIK3R1. Plays a role in endosomal trafficking of TGFBR1 from the endosomes to the nucleus. Plays a role in cell metabolism by regulating adiponecting ans insulin signaling pathways and adaptative thermogenesis. In muscle, negatively regulates adiponectin-simulated glucose uptake and fatty acid oxidation by inhibiting adiponectin signaling pathway through APPL1 sequestration thereby antagonizing APPL1 action. In muscles, negatively regulates insulin-induced plasma membrane recruitment of GLUT4 and glucose uptake through interaction with TBC1D1. Plays a role in cold and diet-induced adaptive thermogenesis by activating ventromedial hypothalamus (VMH) neurons throught AMPK inhibition which enhances sympathetic outflow to subcutaneous white adipose tissue (sWAT), sWAT beiging and cold tolerance. Also plays a role in other signaling pathways namely Wnt/beta-catenin, HGF and glucocorticoid receptor signaling. Positive regulator of beta-catenin/TCF-dependent transcription through direct interaction with RUVBL2/reptin resulting in the relief of RUVBL2-mediated repression of beta-catenin/TCF target genes by modulating the interactions within the beta-catenin-reptin-HDAC complex. May affect adult neurogenesis in hippocampus and olfactory system via regulating the sensitivity of glucocorticoid receptor. Required for fibroblast migration through HGF cell signaling. The protein is DCC-interacting protein 13-beta of Homo sapiens (Human).